Consider the following 104-residue polypeptide: Pterin-4-alpha-carbinolamine dehydratase (104 aa).

A2 is modified (N-acetylalanine). Substrate-binding positions include 61–63 and 78–81; these read DHH and STHD.

Belongs to the pterin-4-alpha-carbinolamine dehydratase family. As to quaternary structure, homotetramer and homodimer.

It is found in the cytoplasm. Its subcellular location is the nucleus. The enzyme catalyses (4aS,6R)-4a-hydroxy-L-erythro-5,6,7,8-tetrahydrobiopterin = (6R)-L-erythro-6,7-dihydrobiopterin + H2O. Functionally, involved in tetrahydrobiopterin biosynthesis. Seems to both prevent the formation of 7-pterins and accelerate the formation of quinonoid-BH2. Coactivator for HNF1A-dependent transcription. Regulates the dimerization of homeodomain protein HNF1A and enhances its transcriptional activity. Also acts as a coactivator for HNF1B-dependent transcription. This is Pterin-4-alpha-carbinolamine dehydratase (pcbd) from Xenopus laevis (African clawed frog).